The primary structure comprises 769 residues: Scarecrow-like protein 14 (769 aa).

4 disordered regions span residues 1–23, 128–157, 279–320, and 364–388; these read MGSY…DFDL, PSSS…GAFS, TEKK…ERSN, and TAQS…DSKK. The 382-residue stretch at 384-765 folds into the GRAS domain; it reads NDSKKETADL…RIVYASSLWV (382 aa). Residues 391-451 form a leucine repeat I (LRI) region; that stretch reads ADLRTLLVLC…EARLAGTGTQ (61 aa). The VHIID stretch occupies residues 470 to 536; it reads YQTYMSVCPF…GGSPKLRITG (67 aa). The VHIID motif lies at 501–505; the sequence is IHIID. The interval 552–584 is leucine repeat II (LRII); the sequence is ETGHRLARYCQRHNVPFEYNAIAQKWETIQVED. The interval 593–687 is PFYRE; sequence VVVNSLFRFR…KEFYGREIVN (95 aa). The segment at 690-765 is SAW; the sequence is ACEGTERVER…RIVYASSLWV (76 aa).

Belongs to the GRAS family. Expressed in roots, shoots, flowers and siliques.

It is found in the nucleus. Probable transcription factor involved in plant development. The sequence is that of Scarecrow-like protein 14 (SCL14) from Arabidopsis thaliana (Mouse-ear cress).